The following is an 858-amino-acid chain: DNA mismatch repair protein MutS (858 aa).

Residue 637-644 (GPNMAGKS) coordinates ATP.

The protein belongs to the DNA mismatch repair MutS family.

This protein is involved in the repair of mismatches in DNA. It is possible that it carries out the mismatch recognition step. This protein has a weak ATPase activity. The polypeptide is DNA mismatch repair protein MutS (Protochlamydia amoebophila (strain UWE25)).